The sequence spans 614 residues: UvrABC system protein C (614 aa).

In terms of domain architecture, GIY-YIG spans threonine 14–isoleucine 91. The UVR domain maps to asparagine 196–leucine 231. The tract at residues leucine 595 to proline 614 is disordered.

This sequence belongs to the UvrC family. In terms of assembly, interacts with UvrB in an incision complex.

The protein resides in the cytoplasm. In terms of biological role, the UvrABC repair system catalyzes the recognition and processing of DNA lesions. UvrC both incises the 5' and 3' sides of the lesion. The N-terminal half is responsible for the 3' incision and the C-terminal half is responsible for the 5' incision. The polypeptide is UvrABC system protein C (Streptococcus pneumoniae (strain Taiwan19F-14)).